The sequence spans 329 residues: NADH-quinone oxidoreductase subunit H (329 aa).

9 helical membrane passes run 9–29 (LIKI…ATYI), 42–62 (GPCY…IKLF), 75–95 (FIFT…MAPI), 117–137 (IGFL…ILAG), 154–174 (IQLL…LMVV), 188–208 (GGFL…FLIA), 238–258 (LKWG…SFVI), 260–280 (IVFF…AILI), and 309–329 (WKIM…IILI).

This sequence belongs to the complex I subunit 1 family. NDH-1 is composed of 14 different subunits. Subunits NuoA, H, J, K, L, M, N constitute the membrane sector of the complex.

It is found in the cell inner membrane. The enzyme catalyses a quinone + NADH + 5 H(+)(in) = a quinol + NAD(+) + 4 H(+)(out). Its function is as follows. NDH-1 shuttles electrons from NADH, via FMN and iron-sulfur (Fe-S) centers, to quinones in the respiratory chain. The immediate electron acceptor for the enzyme in this species is believed to be ubiquinone. Couples the redox reaction to proton translocation (for every two electrons transferred, four hydrogen ions are translocated across the cytoplasmic membrane), and thus conserves the redox energy in a proton gradient. This subunit may bind ubiquinone. The chain is NADH-quinone oxidoreductase subunit H from Helicobacter pylori (strain G27).